Here is a 394-residue protein sequence, read N- to C-terminus: Elongation factor Tu (394 aa).

In terms of domain architecture, tr-type G spans 10 to 204 (KPHVNIGTIG…AVDSYIPQPV (195 aa)). Residues 19–26 (GHVDHGKT) are G1. 19 to 26 (GHVDHGKT) lines the GTP pocket. Position 26 (threonine 26) interacts with Mg(2+). The interval 60–64 (GITIS) is G2. The G3 stretch occupies residues 81–84 (DCPG). Residues 81–85 (DCPGH) and 136–139 (NKVD) contribute to the GTP site. Positions 136–139 (NKVD) are G4. The G5 stretch occupies residues 174-176 (SAL).

It belongs to the TRAFAC class translation factor GTPase superfamily. Classic translation factor GTPase family. EF-Tu/EF-1A subfamily. Monomer.

Its subcellular location is the cytoplasm. It catalyses the reaction GTP + H2O = GDP + phosphate + H(+). In terms of biological role, GTP hydrolase that promotes the GTP-dependent binding of aminoacyl-tRNA to the A-site of ribosomes during protein biosynthesis. The sequence is that of Elongation factor Tu from Rickettsia canadensis (strain McKiel).